A 147-amino-acid polypeptide reads, in one-letter code: UPF0735 ACT domain-containing protein BPUM_2431 (147 aa).

The 76-residue stretch at Thr-70–Ser-145 folds into the ACT domain.

This sequence belongs to the UPF0735 family.

This chain is UPF0735 ACT domain-containing protein BPUM_2431, found in Bacillus pumilus (strain SAFR-032).